The following is a 251-amino-acid chain: POU class 2 homeobox associating factor 3 (251 aa).

One can recognise an OCA domain in the interval 5-27; sequence PKVYQGVRVKITVKELLQQRRAH. Residues 24-45 are disordered; it reads RRAHQAASGGTRSGGSSVHLSD. The span at 31–40 shows a compositional bias: low complexity; that stretch reads SGGTRSGGSS.

This sequence belongs to the POU2AF family. As to quaternary structure, interacts with POU2F3 in a DNA-dependent manner; this interaction increases POU2F3 transactivation activity. In terms of tissue distribution, expressed in many cell types of epithelial, mesenchymal and hematopoietic origins. Expressed in tufs cells.

The protein localises to the cytoplasm. Its subcellular location is the nucleus. Its function is as follows. Transcriptional coactivator that specifically associates with POU2F3. This complex drives the development of tuft cells, a rare a rare chemosensory cells that coordinate immune and neural functions within mucosal epithelial tissues. This Homo sapiens (Human) protein is POU class 2 homeobox associating factor 3.